We begin with the raw amino-acid sequence, 755 residues long: uncharacterized protein (755 aa).

Disordered stretches follow at residues 1–44 (MAAP…AAAQ), 72–91 (AEHS…ATAQ), 99–174 (FSLS…IPHY), 393–467 (TTNV…SSSR), 523–545 (LPKT…EGGG), 584–672 (VSSS…LPSG), and 734–755 (QAAT…PRRK). Low complexity-rich tracts occupy residues 10 to 25 (TTTQ…TTTT) and 35 to 44 (TTTGSGAAAQ). Composition is skewed to low complexity over residues 112 to 130 (ISSS…NASS), 139 to 151 (SPDL…LSGS), and 393 to 412 (TTNV…TKST). Residues 429–446 (IEEDTIQFDDPGQGEDDN) show a composition bias toward acidic residues. Residues 452 to 462 (NTPPPPGPPPN) show a composition bias toward pro residues. Positions 536–545 (ATGGVTEGGG) are enriched in gly residues. Residues 590-599 (LPQPQVATTI) are compositionally biased toward polar residues. Composition is skewed to low complexity over residues 600-666 (TPQA…QTPQ) and 740-755 (SQPS…PRRK).

The protein belongs to the chlamydial CPn_0572/CT_456/TC_0741 family.

This is an uncharacterized protein from Chlamydia pneumoniae (Chlamydophila pneumoniae).